The chain runs to 210 residues: ATP-dependent Clp protease proteolytic subunit (210 aa).

Catalysis depends on Ser111, which acts as the Nucleophile. The active site involves His136.

It belongs to the peptidase S14 family. Fourteen ClpP subunits assemble into 2 heptameric rings which stack back to back to give a disk-like structure with a central cavity, resembling the structure of eukaryotic proteasomes.

It localises to the cytoplasm. The catalysed reaction is Hydrolysis of proteins to small peptides in the presence of ATP and magnesium. alpha-casein is the usual test substrate. In the absence of ATP, only oligopeptides shorter than five residues are hydrolyzed (such as succinyl-Leu-Tyr-|-NHMec, and Leu-Tyr-Leu-|-Tyr-Trp, in which cleavage of the -Tyr-|-Leu- and -Tyr-|-Trp bonds also occurs).. In terms of biological role, cleaves peptides in various proteins in a process that requires ATP hydrolysis. Has a chymotrypsin-like activity. Plays a major role in the degradation of misfolded proteins. The sequence is that of ATP-dependent Clp protease proteolytic subunit from Halorhodospira halophila (strain DSM 244 / SL1) (Ectothiorhodospira halophila (strain DSM 244 / SL1)).